A 362-amino-acid polypeptide reads, in one-letter code: tRNA-specific 2-thiouridylase MnmA (362 aa).

ATP is bound by residues 13–20 (GLSGGVDS) and M39. An interaction with target base in tRNA region spans residues 99–101 (NPD). The Nucleophile role is filled by C104. An intrachain disulfide couples C104 to C200. G128 is a binding site for ATP. The interaction with tRNA stretch occupies residues 150-152 (KDQ). C200 (cysteine persulfide intermediate) is an active-site residue. The tract at residues 310–311 (RY) is interaction with tRNA.

Belongs to the MnmA/TRMU family.

Its subcellular location is the cytoplasm. It carries out the reaction S-sulfanyl-L-cysteinyl-[protein] + uridine(34) in tRNA + AH2 + ATP = 2-thiouridine(34) in tRNA + L-cysteinyl-[protein] + A + AMP + diphosphate + H(+). Its function is as follows. Catalyzes the 2-thiolation of uridine at the wobble position (U34) of tRNA, leading to the formation of s(2)U34. This is tRNA-specific 2-thiouridylase MnmA from Vesicomyosocius okutanii subsp. Calyptogena okutanii (strain HA).